The sequence spans 371 residues: dTDP-4-amino-4,6-dideoxy-D-glucose transaminase (371 aa).

Lysine 186 bears the N6-(pyridoxal phosphate)lysine mark.

This sequence belongs to the DegT/DnrJ/EryC1 family. Pyridoxal 5'-phosphate is required as a cofactor.

The catalysed reaction is dTDP-4-amino-4,6-dideoxy-D-glucose + 2-oxoglutarate = dTDP-4-dehydro-6-deoxy-alpha-D-glucose + L-glutamate. It functions in the pathway bacterial outer membrane biogenesis; lipopolysaccharide biosynthesis. Functionally, catalyzes the conversion of dTDP-4-dehydro-6-deoxy-D-glucose (dTDP-D-Glc4O) to dTDP-4-amino-4,6-dideoxy-D-glucose (dTDP-D-Qui4N). The polypeptide is dTDP-4-amino-4,6-dideoxy-D-glucose transaminase (vioA) (Escherichia coli).